The following is a 464-amino-acid chain: ATP synthase subunit beta (464 aa).

Position 148 to 155 (148 to 155 (GGAGVGKT)) interacts with ATP.

This sequence belongs to the ATPase alpha/beta chains family. As to quaternary structure, F-type ATPases have 2 components, CF(1) - the catalytic core - and CF(0) - the membrane proton channel. CF(1) has five subunits: alpha(3), beta(3), gamma(1), delta(1), epsilon(1). CF(0) has three main subunits: a(1), b(2) and c(9-12). The alpha and beta chains form an alternating ring which encloses part of the gamma chain. CF(1) is attached to CF(0) by a central stalk formed by the gamma and epsilon chains, while a peripheral stalk is formed by the delta and b chains.

The protein localises to the cell inner membrane. It catalyses the reaction ATP + H2O + 4 H(+)(in) = ADP + phosphate + 5 H(+)(out). Produces ATP from ADP in the presence of a proton gradient across the membrane. The catalytic sites are hosted primarily by the beta subunits. The sequence is that of ATP synthase subunit beta from Acinetobacter baylyi (strain ATCC 33305 / BD413 / ADP1).